The chain runs to 101 residues: Small ribosomal subunit protein bS6 (101 aa).

It belongs to the bacterial ribosomal protein bS6 family.

In terms of biological role, binds together with bS18 to 16S ribosomal RNA. The sequence is that of Small ribosomal subunit protein bS6 from Nitratidesulfovibrio vulgaris (strain ATCC 29579 / DSM 644 / CCUG 34227 / NCIMB 8303 / VKM B-1760 / Hildenborough) (Desulfovibrio vulgaris).